The following is an 858-amino-acid chain: Bifunctional uridylyltransferase/uridylyl-removing enzyme (858 aa).

The interval 1–324 (MSASVAEPPP…PATSGVTRVL (324 aa)) is uridylyltransferase. The interval 325 to 681 (SPGRFVEKQG…ARPSPVGDAL (357 aa)) is uridylyl-removing. One can recognise an HD domain in the interval 443–565 (VDQHILMVLR…VGSERRLTAL (123 aa)). ACT domains lie at 682–761 (QVLV…PEPS) and 790–858 (ILSV…AIAV).

Belongs to the GlnD family. Mg(2+) is required as a cofactor.

The enzyme catalyses [protein-PII]-L-tyrosine + UTP = [protein-PII]-uridylyl-L-tyrosine + diphosphate. The catalysed reaction is [protein-PII]-uridylyl-L-tyrosine + H2O = [protein-PII]-L-tyrosine + UMP + H(+). With respect to regulation, uridylyltransferase (UTase) activity is inhibited by glutamine, while glutamine activates uridylyl-removing (UR) activity. Functionally, modifies, by uridylylation and deuridylylation, the PII regulatory proteins (GlnB and homologs), in response to the nitrogen status of the cell that GlnD senses through the glutamine level. Under low glutamine levels, catalyzes the conversion of the PII proteins and UTP to PII-UMP and PPi, while under higher glutamine levels, GlnD hydrolyzes PII-UMP to PII and UMP (deuridylylation). Thus, controls uridylylation state and activity of the PII proteins, and plays an important role in the regulation of nitrogen assimilation and metabolism. This Burkholderia mallei (strain ATCC 23344) protein is Bifunctional uridylyltransferase/uridylyl-removing enzyme.